A 110-amino-acid chain; its full sequence is Protein SPIRAL1-like 2 (110 aa).

The interval 28-110 is disordered; it reads AVNKTPAETE…LDYLFGGGSN (83 aa). Low complexity predominate over residues 40–52; it reads AHAPPTQAAAANA. The span at 63–82 shows a compositional bias: polar residues; that stretch reads LNSNSANNYMRAEGQNTGNF. Ser67 is subject to Phosphoserine. The segment covering 95-110 has biased composition (gly residues); the sequence is PGGGSSLDYLFGGGSN.

This sequence belongs to the SPIRAL1 family. In terms of tissue distribution, ubiquitous.

Its function is as follows. Acts redundantly with SPR1 in maintaining the cortical microtubules organization essential for anisotropic cell growth. This Arabidopsis thaliana (Mouse-ear cress) protein is Protein SPIRAL1-like 2 (SP1L2).